Reading from the N-terminus, the 198-residue chain is MKQPSALSALVEALRALPGVGPKSAQRMAYHLMQHDRDGAEKLGRSLLFATEHLQHCEKCNTFTEAQICEVCLDEERDPTLLCVVETPADQIMLEQTMTYRGLYFVLMGRLSPLDGIGPKEIHFDRLVRRASDGVIKEVVLATNFTNEGEATAHYLGQTLKARGLAVTRLARGVPVGGELEYVDAGTIARAMLDRRSM.

The C4-type zinc-finger motif lies at 57–72 (CEKCNTFTEAQICEVC). A Toprim domain is found at 80–175 (TLLCVVETPA…AVTRLARGVP (96 aa)).

It belongs to the RecR family.

In terms of biological role, may play a role in DNA repair. It seems to be involved in an RecBC-independent recombinational process of DNA repair. It may act with RecF and RecO. The polypeptide is Recombination protein RecR (Paraburkholderia phytofirmans (strain DSM 17436 / LMG 22146 / PsJN) (Burkholderia phytofirmans)).